Here is a 51-residue protein sequence, read N- to C-terminus: MARYRCCRSQSRSRCCRPRRRCRRRRRRSCRARRRATRCCRRRYRLRCRRY.

Belongs to the protamine P1 family. Testis.

It is found in the nucleus. The protein localises to the chromosome. Protamines substitute for histones in the chromatin of sperm during the haploid phase of spermatogenesis. They compact sperm DNA into a highly condensed, stable and inactive complex. This is Sperm protamine P1 (PRM1) from Trachypithecus francoisi (Francois' leaf monkey).